Reading from the N-terminus, the 193-residue chain is Bcl-2-binding component 3 (193 aa).

Disordered stretches follow at residues 1–31 (MARARQEGSSPEPVEGLARDSPRPFPLGRLM) and 71–131 (ALGG…VEEE). Ser10 carries the phosphoserine modification. Residues 137–151 (IGAQLRRMADDLNAQ) carry the BH3 motif.

Belongs to the Bcl-2 family. Interacts with MCL1 and BCL2A1. Interacts with BCL2 and BCL2L1/BCL-XL. Interacts (via BH3 domain) with NOL3 (via CARD domain); this interaction prevents BBC3 association with BCL2 and results in CASP8 activation.

It localises to the mitochondrion. In terms of biological role, essential mediator of p53/TP53-dependent and p53/TP53-independent apoptosis. Promotes partial unfolding of BCL2L1 and dissociation of BCL2L1 from p53/TP53, releasing the bound p53/TP53 to induce apoptosis. Regulates ER stress-induced neuronal apoptosis. The chain is Bcl-2-binding component 3 (Bbc3) from Mus musculus (Mouse).